A 111-amino-acid chain; its full sequence is MASFDYLFHPFVPCTICPDFPLYKSPAFPSSCLHHPRLLFNDKAFCPLFLVPFPASFTRWLTFLFHLVIYNNKMHHHTYAPHIHDLRAALDTTAPQKKCPKETLHRSDHQG.

Residues 48–70 (LFLVPFPASFTRWLTFLFHLVIY) traverse the membrane as a helical segment.

The protein localises to the membrane. This is an uncharacterized protein from Saccharomyces cerevisiae (strain ATCC 204508 / S288c) (Baker's yeast).